The following is a 303-amino-acid chain: Glycine--tRNA ligase alpha subunit (303 aa).

Belongs to the class-II aminoacyl-tRNA synthetase family. In terms of assembly, tetramer of two alpha and two beta subunits.

Its subcellular location is the cytoplasm. It catalyses the reaction tRNA(Gly) + glycine + ATP = glycyl-tRNA(Gly) + AMP + diphosphate. This chain is Glycine--tRNA ligase alpha subunit, found in Stenotrophomonas maltophilia (strain R551-3).